We begin with the raw amino-acid sequence, 506 residues long: MSVELWQQCVELLRDELPAQQFNTWIRPLQVEAEGDELRVYAPNRFVLDWVNEKYLGRLLELLGENGSGIAPALSLLIGSRRSSAPRAAPNAPVSAAVAASLAQTQAHKTAPAAAVEPVAVAAAEPVLVETSSRDSFDAMAEPAAAPPSGGGRAEQRTVQVEGALKHTSYLNRTFTFDTFVEGKSNQLARAAAWQVADNPKHGYNPLFLYGGVGLGKTHLMHAVGNHLLKKNPNAKVVYLHSERFVADMVKALQLNAINEFKRFYRSVDALLIDDIQFFARKERSQEEFFHTFNALLEGGQQVILTSDRYPKEIEGLEERLKSRFGWGLTVAVEPPELETRVAILMKKADQAKVELPHDAAFFIAQRIRSNVRELEGALKRVIAHSHFMGRDITIELIRESLKDLLALQDKLVSVDNIQRTVAEYYKIKISDLLSKRRSRSVARPRQVAMALSKELTNHSLPEIGDMFGGRDHTTVLHACRKINELKESDADIREDYKNLLRTLTT.

The segment at 1–87 is domain I, interacts with DnaA modulators; it reads MSVELWQQCV…IGSRRSSAPR (87 aa). The segment at 87–169 is domain II; sequence RAAPNAPVSA…QVEGALKHTS (83 aa). A disordered region spans residues 135–154; sequence DSFDAMAEPAAAPPSGGGRA. Residues 139–148 are compositionally biased toward low complexity; that stretch reads AMAEPAAAPP. Residues 170–386 are domain III, AAA+ region; it reads YLNRTFTFDT…GALKRVIAHS (217 aa). The ATP site is built by Gly214, Gly216, Lys217, and Thr218. The segment at 387-506 is domain IV, binds dsDNA; that stretch reads HFMGRDITIE…YKNLLRTLTT (120 aa).

It belongs to the DnaA family. As to quaternary structure, oligomerizes as a right-handed, spiral filament on DNA at oriC.

It localises to the cytoplasm. Functionally, plays an essential role in the initiation and regulation of chromosomal replication. ATP-DnaA binds to the origin of replication (oriC) to initiate formation of the DNA replication initiation complex once per cell cycle. Binds the DnaA box (a 9 base pair repeat at the origin) and separates the double-stranded (ds)DNA. Forms a right-handed helical filament on oriC DNA; dsDNA binds to the exterior of the filament while single-stranded (ss)DNA is stabiized in the filament's interior. The ATP-DnaA-oriC complex binds and stabilizes one strand of the AT-rich DNA unwinding element (DUE), permitting loading of DNA polymerase. After initiation quickly degrades to an ADP-DnaA complex that is not apt for DNA replication. Binds acidic phospholipids. In terms of biological role, non-cooperatively binds DnaA boxes in the minimal plasmid RK2 replication origin (oriV). In vitro in the presence of plasmid RK2-derived TrfA and E.coli protein HU, forms an open complex at oriV. This complex was not however competent for formation of a pre-priming complex with E.coli DnaB and DnaC. Broad host range plasmid RK2 requires not only DnaA for replication but also TrfA and host factors. This is Chromosomal replication initiator protein DnaA from Pseudomonas putida (strain ATCC 47054 / DSM 6125 / CFBP 8728 / NCIMB 11950 / KT2440).